A 365-amino-acid chain; its full sequence is Aminomethyltransferase (365 aa).

Belongs to the GcvT family. The glycine cleavage system is composed of four proteins: P, T, L and H.

It carries out the reaction N(6)-[(R)-S(8)-aminomethyldihydrolipoyl]-L-lysyl-[protein] + (6S)-5,6,7,8-tetrahydrofolate = N(6)-[(R)-dihydrolipoyl]-L-lysyl-[protein] + (6R)-5,10-methylene-5,6,7,8-tetrahydrofolate + NH4(+). Functionally, the glycine cleavage system catalyzes the degradation of glycine. In Frankia alni (strain DSM 45986 / CECT 9034 / ACN14a), this protein is Aminomethyltransferase.